Reading from the N-terminus, the 31-residue chain is Photosystem II reaction center protein T (31 aa).

The chain crosses the membrane as a helical span at residues Ala-3–Phe-23.

Belongs to the PsbT family. As to quaternary structure, PSII is composed of 1 copy each of membrane proteins PsbA, PsbB, PsbC, PsbD, PsbE, PsbF, PsbH, PsbI, PsbJ, PsbK, PsbL, PsbM, PsbT, PsbY, PsbZ, Psb30/Ycf12, at least 3 peripheral proteins of the oxygen-evolving complex and a large number of cofactors. It forms dimeric complexes.

It is found in the plastid. It localises to the chloroplast thylakoid membrane. Functionally, found at the monomer-monomer interface of the photosystem II (PS II) dimer, plays a role in assembly and dimerization of PSII. PSII is a light-driven water plastoquinone oxidoreductase, using light energy to abstract electrons from H(2)O, generating a proton gradient subsequently used for ATP formation. This chain is Photosystem II reaction center protein T, found in Stigeoclonium helveticum (Green alga).